A 151-amino-acid polypeptide reads, in one-letter code: Ribosome maturation factor RimP (151 aa).

The protein belongs to the RimP family.

It localises to the cytoplasm. Its function is as follows. Required for maturation of 30S ribosomal subunits. The sequence is that of Ribosome maturation factor RimP from Hydrogenovibrio crunogenus (strain DSM 25203 / XCL-2) (Thiomicrospira crunogena).